A 605-amino-acid polypeptide reads, in one-letter code: 9-cis-epoxycarotenoid dioxygenase NCED1, chloroplastic (605 aa).

The transit peptide at 1-16 directs the protein to the chloroplast; the sequence is MATTTSHATNTWIKTK. The disordered stretch occupies residues 55–89; it reads ILHFPKQSSNYQTPKNNTISHPKQENNNSSSSSTS. Positions 60 to 75 are enriched in polar residues; sequence KQSSNYQTPKNNTISH. Low complexity predominate over residues 80–89; it reads NNNSSSSSTS. His-302, His-351, His-416, and His-592 together coordinate Fe cation.

It belongs to the carotenoid oxygenase family. The cofactor is Fe(2+). In terms of tissue distribution, expressed in developing and ripening fruits. Highly expressed in pulp. Observed in unpollinated ovaries (e.g. ovules, placenta and pericarp). Expressed in flowers.

The protein localises to the plastid. It is found in the chloroplast stroma. The enzyme catalyses a 9-cis-epoxycarotenoid + O2 = a 12'-apo-carotenal + 2-cis,4-trans-xanthoxin. It catalyses the reaction 9-cis-violaxanthin + O2 = (3S,5R,6S)-5,6-epoxy-3-hydroxy-5,6-dihydro-12'-apo-beta-caroten-12'-al + 2-cis,4-trans-xanthoxin. The catalysed reaction is 9'-cis-neoxanthin + O2 = (3S,5R,6R)-3,5-dihydroxy-6,7-didehydro-5,6-dihydro-12'-apo-beta-caroten-12'-al + 2-cis,4-trans-xanthoxin. Its pathway is plant hormone biosynthesis; abscisate biosynthesis. Functionally, has a 11,12(11',12') 9-cis epoxycarotenoid cleavage activity. Catalyzes the first step of abscisic-acid (ABA) biosynthesis from carotenoids. Required for ABA accumulation upon drought. Required for ABA-mediated regulation of anther/pollen development, including metabolism, cell wall modification and transcription level. Positive regulator of fruit ripening involved in the biosynthesis of abscisic acid (ABA); initiates ABA biosynthesis at the onset of fruit ripening. Modulates the degree of pigmentation and carotenoid composition as well as pectin catabolism during ripening and may regulate the ethylene production and action in climacteric tomato fruit. This Solanum lycopersicum (Tomato) protein is 9-cis-epoxycarotenoid dioxygenase NCED1, chloroplastic.